We begin with the raw amino-acid sequence, 443 residues long: Transmembrane protein 184C (443 aa).

A run of 7 helical transmembrane segments spans residues 15 to 35 (LVVL…IWKL), 46 to 66 (AWFI…WGIL), 84 to 104 (ILWM…YPDI), 182 to 202 (PVTT…EGDF), 210 to 230 (YLVI…VLFY), 252 to 272 (VVFV…AGVI), and 284 to 304 (VATG…AVAH). Positions 369–378 (TSLLSSSTQD) are enriched in polar residues. Positions 369-422 (TSLLSSSTQDPISAASSIPPSPSGHYQGFGQTITPQTTPTATTMPEELYSADSP) are disordered. Residues 399–411 (QTITPQTTPTATT) are compositionally biased toward low complexity.

It belongs to the TMEM184 family.

The protein localises to the membrane. Functionally, may play a role in cell growth. The protein is Transmembrane protein 184C (tmem184c) of Xenopus tropicalis (Western clawed frog).